We begin with the raw amino-acid sequence, 582 residues long: L-fucose isomerase (582 aa).

Residues Glu333 and Asp357 each act as proton acceptor in the active site. The Mn(2+) site is built by Glu333, Asp357, and His520.

Belongs to the L-fucose isomerase family. The cofactor is Mn(2+).

It localises to the cytoplasm. The enzyme catalyses L-fucose = L-fuculose. Its pathway is carbohydrate degradation; L-fucose degradation; L-lactaldehyde and glycerone phosphate from L-fucose: step 1/3. Converts the aldose L-fucose into the corresponding ketose L-fuculose. In Vibrio vulnificus (strain YJ016), this protein is L-fucose isomerase.